Here is a 161-residue protein sequence, read N- to C-terminus: Leucine-rich colipase-like protein 1 (161 aa).

The signal sequence occupies residues 1–25 (MSVSVWPPLLLLLLLLLLWAVPTFQ).

This is Leucine-rich colipase-like protein 1 (Lrcol1) from Mus musculus (Mouse).